A 167-amino-acid polypeptide reads, in one-letter code: Transcriptional repressor NrdR (167 aa).

Residues 3-34 (CPFCRNPDSRVVDSRMADDGSAIRRRRQCPEC) fold into a zinc finger. The ATP-cone domain maps to 46 to 136 (LSVIKRSGVG…VYQAFESLED (91 aa)). The tract at residues 148–167 (AQEDAAERPATPRKPEKTSL) is disordered.

This sequence belongs to the NrdR family. Requires Zn(2+) as cofactor.

Its function is as follows. Negatively regulates transcription of bacterial ribonucleotide reductase nrd genes and operons by binding to NrdR-boxes. This is Transcriptional repressor NrdR from Pseudarthrobacter chlorophenolicus (strain ATCC 700700 / DSM 12829 / CIP 107037 / JCM 12360 / KCTC 9906 / NCIMB 13794 / A6) (Arthrobacter chlorophenolicus).